The sequence spans 410 residues: Transcription factor E2F4 (410 aa).

A disordered region spans residues 1–20 (MAEAGPQAPPPPGTPSRHEK). Ala-2 is modified (N-acetylalanine). Residues 16–85 (SRHEKSLGLL…KNSIQWKGVG (70 aa)) mediate DNA binding. A leucine-zipper region spans residues 43-65 (LKLAADTLAVRQKRRIYDITNVL). A DEF box motif is present at residues 48–85 (DTLAVRQKRRIYDITNVLEGIGLIEKKSKNSIQWKGVG). A dimerization region spans residues 86–181 (PGCNTREIAD…GLNGQKKYQI (96 aa)). Disordered regions lie at residues 203 to 258 (PPVA…GSTQ) and 303 to 341 (SALLDSSSSSSSSSSSSSSSSSGPNPSTSFEPIKADPTG). Low complexity-rich tracts occupy residues 231–252 (PALAQPQESSPPSSPQLTTPTP) and 308–324 (SSSSSSSSSSSSSSSSS). Residues 334–410 (PIKADPTGVL…DLFDVPVLKL (77 aa)) form a transactivation region. Ser-381 is subject to Phosphoserine. The HCFC1-binding-motif (HBM) signature appears at 386–389 (DHDY). The interaction with RBL1 and RBL2 stretch occupies residues 387 to 404 (HDYIYNLDESEGVCDLFD).

Belongs to the E2F/DP family. As to quaternary structure, component of the DRTF1/E2F transcription factor complex. Binds cooperatively with TFDP1/Dp-1 to E2F sites. The E2F4/TFDP1 dimer interacts preferentially with pocket protein RBL1, which inhibits the E2F transactivation domain. Lower affinity interaction has been found with retinoblastoma protein RB1. Interacts with TRRAP, which probably mediates its interaction with histone acetyltransferase complexes, leading to transcription activation. Interacts with HCFC1. Component of the DREAM complex (also named LINC complex) at least composed of E2F4, E2F5, LIN9, LIN37, LIN52, LIN54, MYBL1, MYBL2, RBL1, RBL2, RBBP4, TFDP1 and TFDP2. The complex exists in quiescent cells where it represses cell cycle-dependent genes. It dissociates in S phase when LIN9, LIN37, LIN52 and LIN54 form a subcomplex that binds to MYBL2. Interacts with PML. Interacts with CEBPA (when phosphorylated). Post-translationally, differentially phosphorylated in vivo.

It is found in the nucleus. Transcription activator that binds DNA cooperatively with DP proteins through the E2 recognition site, 5'-TTTC[CG]CGC-3' found in the promoter region of a number of genes whose products are involved in cell cycle regulation or in DNA replication. The DRTF1/E2F complex functions in the control of cell-cycle progression from G1 to S phase. E2F4 binds with high affinity to RBL1 and RBL2. In some instances can also bind RB1. Specifically required for multiciliate cell differentiation: together with MCIDAS and E2F5, binds and activate genes required for centriole biogenesis. The chain is Transcription factor E2F4 (E2f4) from Mus musculus (Mouse).